The following is a 426-amino-acid chain: Putative two-component response regulator ARR20 (426 aa).

One can recognise a Response regulatory domain in the interval 40-155 (SNRVLLVGAD…VIAVLWRHVY (116 aa)). At Asp-91 the chain carries 4-aspartylphosphate. Positions 161-216 (KSGLDKPGESGTVESDPDEYDDLEQDNLYESNEEGSKNTCDHKEEKSPTKKPRMQW) are disordered. Residues 175-193 (SDPDEYDDLEQDNLYESNE) show a composition bias toward acidic residues. A compositionally biased stretch (basic and acidic residues) spans 194 to 208 (EGSKNTCDHKEEKSP). A Nuclear localization signal motif is present at residues 210–213 (KKPR). The segment at residues 213-268 (RMQWTPELHHKFEVAVEKMGSLEKAFPKTILKYMQEELNVQGLTRNNVASHLQKYR) is a DNA-binding region (myb-like GARP).

Belongs to the ARR family. Type-B subfamily. In terms of assembly, binds the target DNA as a monomer. In terms of processing, two-component system major event consists of a His-to-Asp phosphorelay between a sensor histidine kinase (HK) and a response regulator (RR). In plants, the His-to-Asp phosphorelay involves an additional intermediate named Histidine-containing phosphotransfer protein (HPt). This multistep phosphorelay consists of a His-Asp-His-Asp sequential transfer of a phosphate group between first a His and an Asp of the HK protein, followed by the transfer to a conserved His of the HPt protein and finally the transfer to an Asp in the receiver domain of the RR protein. As to expression, predominantly expressed in mature pistil tip. Also detected in the shoot apical meristem as well as vascular tissue and hydathodes of the leaves.

It localises to the nucleus. Putative transcriptional activator that binds specifically to the DNA sequence 5'-[AG]GATT-3'. Functions as a response regulator involved in His-to-Asp phosphorelay signal transduction system. Phosphorylation of the Asp residue in the receiver domain activates the ability of the protein to promote the transcription of target genes. Could directly activate some type-A response regulators in response to cytokinins. The protein is Putative two-component response regulator ARR20 (ARR20) of Arabidopsis thaliana (Mouse-ear cress).